Consider the following 218-residue polypeptide: Cold-regulated protein 28 (218 aa).

2 disordered regions span residues 1–51 (MEND…ADSK) and 166–218 (TKHS…KPRT). Low complexity predominate over residues 20–37 (EASAESQSESTLSNSLDS). Over residues 186–207 (GEVSKKREREANNDDSSLKEDQ) the composition is skewed to basic and acidic residues.

The protein resides in the nucleus. Together with COR27, involved in central circadian clock regulation and in flowering promotion, by binding to the chromatin of clock-associated evening genes TOC1, PRR5, ELF4 and cold-responsive genes in order to repress their transcription. Negative regulator of freezing tolerance. This chain is Cold-regulated protein 28, found in Arabidopsis thaliana (Mouse-ear cress).